Reading from the N-terminus, the 635-residue chain is 1-deoxy-D-xylulose-5-phosphate synthase (635 aa).

Thiamine diphosphate is bound by residues histidine 74 and 115-117; that span reads AHS. Aspartate 146 lines the Mg(2+) pocket. Thiamine diphosphate-binding positions include 147-148, asparagine 176, tyrosine 283, and glutamate 365; that span reads GA. Asparagine 176 is a binding site for Mg(2+).

The protein belongs to the transketolase family. DXPS subfamily. In terms of assembly, homodimer. Requires Mg(2+) as cofactor. It depends on thiamine diphosphate as a cofactor.

The catalysed reaction is D-glyceraldehyde 3-phosphate + pyruvate + H(+) = 1-deoxy-D-xylulose 5-phosphate + CO2. Its pathway is metabolic intermediate biosynthesis; 1-deoxy-D-xylulose 5-phosphate biosynthesis; 1-deoxy-D-xylulose 5-phosphate from D-glyceraldehyde 3-phosphate and pyruvate: step 1/1. In terms of biological role, catalyzes the acyloin condensation reaction between C atoms 2 and 3 of pyruvate and glyceraldehyde 3-phosphate to yield 1-deoxy-D-xylulose-5-phosphate (DXP). In Polaromonas sp. (strain JS666 / ATCC BAA-500), this protein is 1-deoxy-D-xylulose-5-phosphate synthase.